The sequence spans 488 residues: Germacrene A hydroxylase (488 aa).

Residues 7–23 (TSIALATILFFVYKFAT) traverse the membrane as a helical; Signal-anchor for type II membrane protein segment. 4 N-linked (GlcNAc...) asparagine glycosylation sites follow: asparagine 169, asparagine 260, asparagine 379, and asparagine 410. A heme-binding site is contributed by cysteine 432.

Belongs to the cytochrome P450 family. Expressed in floral glandular trichomes.

The protein resides in the endoplasmic reticulum membrane. It catalyses the reaction (+)-(R)-germacrene A + 3 reduced [NADPH--hemoprotein reductase] + 3 O2 = germacra-1(10),4,11(13)-trien-12-oate + 3 oxidized [NADPH--hemoprotein reductase] + 4 H2O + 4 H(+). Its pathway is secondary metabolite biosynthesis; terpenoid biosynthesis. In terms of biological role, involved in the biosynthesis of germacrene-derived sesquiterpene lactones. Component of the parthenolide biosynthetic pathway; parthenolide and conjugates are promising anti-cancer drugs highly active against colon cancer cells. Catalyzes three consecutive oxidations of germacrene A to produce germacrene A acid. The protein is Germacrene A hydroxylase of Tanacetum parthenium (Feverfew).